Here is a 573-residue protein sequence, read N- to C-terminus: Delta 8-(E)-sphingolipid desaturase (573 aa).

The Cytochrome b5 heme-binding domain maps to 2 to 77 (SRVLSRRDIA…FKIWKIGRID (76 aa)). His37 and His60 together coordinate heme. Residues 228 to 248 (LFGISFYLLSLKWFAISAICL) traverse the membrane as a helical segment. The short motif at 260-264 (HDAGH) is the Histidine box-1 element. Residues 273–293 (VDNIIGMTVASWIGGLSLGWW) form a helical membrane-spanning segment. The Histidine box-2 signature appears at 297 to 301 (HDVHH). 3 helical membrane passes run 353-372 (YLYYPILCFGRFNLYRLSWM), 393-413 (LAELSFFNYWFFYLIIYKQMP), and 422-442 (VMISHIATMIVHVQITLSHFA). The Histidine box-3 motif lies at 481-485 (QVIHH).

The protein belongs to the fatty acid desaturase type 1 family.

The protein resides in the membrane. The enzyme catalyses an N-acylsphing-4-enine + 2 Fe(II)-[cytochrome b5] + O2 + 2 H(+) = a (4E,8E)-4-sphinga-4,8-dienine ceramide + 2 Fe(III)-[cytochrome b5] + 2 H2O. Its pathway is lipid metabolism; sphingolipid metabolism. Delta(8)-fatty-acid desaturase which introduces a double bond at the 8-position in the long-chain base (LCB) of ceramides. Required for the formation of the di-unsaturated sphingoid base (E,E)-sphinga-4,8-dienine during glucosylceramide (GluCer) biosynthesis. The polypeptide is Delta 8-(E)-sphingolipid desaturase (Kluyveromyces lactis (Yeast)).